A 518-amino-acid polypeptide reads, in one-letter code: Glutamate--cysteine ligase (518 aa).

The protein belongs to the glutamate--cysteine ligase type 1 family. Type 1 subfamily.

It carries out the reaction L-cysteine + L-glutamate + ATP = gamma-L-glutamyl-L-cysteine + ADP + phosphate + H(+). It functions in the pathway sulfur metabolism; glutathione biosynthesis; glutathione from L-cysteine and L-glutamate: step 1/2. The protein is Glutamate--cysteine ligase of Klebsiella pneumoniae (strain 342).